Here is a 291-residue protein sequence, read N- to C-terminus: Probable prolyl 4-hydroxylase 12 (291 aa).

The Cytoplasmic segment spans residues 1–156 (MACLSRIFLI…GEEPSSVLHE (156 aa)). One can recognise a Fe2OG dioxygenase domain in the interval 125–239 (NGGSIKVRSY…LLVATKLIYA (115 aa)). 2 residues coordinate Fe cation: K142 and D144. The helical; Signal-anchor for type II membrane protein transmembrane segment at 157-173 (SLLATVVLYLSNTTQGG) threads the bilayer. Residues 174-291 (ELLFPNSEMK…GTCRKSCNAC (118 aa)) are Lumenal-facing. The N-linked (GlcNAc...) asparagine glycan is linked to N211. H220 is a binding site for Fe cation. The ShKT domain occupies 251 to 291 (CSDEDENCGRWAKLGECKKNPVYMIGSPDYYGTCRKSCNAC). 3 disulfides stabilise this stretch: C251/C291, C258/C284, and C267/C288.

This sequence belongs to the P4HA family. Fe(2+) serves as cofactor. Requires L-ascorbate as cofactor.

The protein localises to the endoplasmic reticulum membrane. The enzyme catalyses L-prolyl-[collagen] + 2-oxoglutarate + O2 = trans-4-hydroxy-L-prolyl-[collagen] + succinate + CO2. Its function is as follows. Catalyzes the post-translational formation of 4-hydroxyproline in -Xaa-Pro-Gly- sequences in proline-rich peptide sequences of plant glycoproteins and other proteins. Hydroxyprolines are important constituent of many plant cell wall glycoproteins such as extensins, hydroxyproline-rich glycoproteins, lectins and arabinogalactan proteins. This Arabidopsis thaliana (Mouse-ear cress) protein is Probable prolyl 4-hydroxylase 12.